A 375-amino-acid chain; its full sequence is uncharacterized protein (375 aa).

Belongs to the mimivirus L17x/L18x family.

This is an uncharacterized protein from Acanthamoeba polyphaga (Amoeba).